The chain runs to 779 residues: Endonuclease MutS2 (779 aa).

328-335 (GPNTGGKT) serves as a coordination point for ATP. Positions 704-779 (LDLRGKRYEE…GSGATIVTLG (76 aa)) constitute a Smr domain.

It belongs to the DNA mismatch repair MutS family. MutS2 subfamily. In terms of assembly, homodimer. Binds to stalled ribosomes, contacting rRNA.

Endonuclease that is involved in the suppression of homologous recombination and thus may have a key role in the control of bacterial genetic diversity. Its function is as follows. Acts as a ribosome collision sensor, splitting the ribosome into its 2 subunits. Detects stalled/collided 70S ribosomes which it binds and splits by an ATP-hydrolysis driven conformational change. Acts upstream of the ribosome quality control system (RQC), a ribosome-associated complex that mediates the extraction of incompletely synthesized nascent chains from stalled ribosomes and their subsequent degradation. Probably generates substrates for RQC. This Streptococcus agalactiae serotype Ia (strain ATCC 27591 / A909 / CDC SS700) protein is Endonuclease MutS2.